A 204-amino-acid chain; its full sequence is Large ribosomal subunit protein bL25 (204 aa).

Belongs to the bacterial ribosomal protein bL25 family. CTC subfamily. As to quaternary structure, part of the 50S ribosomal subunit; part of the 5S rRNA/L5/L18/L25 subcomplex. Contacts the 5S rRNA. Binds to the 5S rRNA independently of L5 and L18.

This is one of the proteins that binds to the 5S RNA in the ribosome where it forms part of the central protuberance. This Pseudoalteromonas translucida (strain TAC 125) protein is Large ribosomal subunit protein bL25.